Here is a 35-residue protein sequence, read N- to C-terminus: Photosystem II reaction center protein T (35 aa).

Residues 3 to 23 (ALVYTFLLISTLGIIFFAIFF) form a helical membrane-spanning segment.

The protein belongs to the PsbT family. PSII is composed of 1 copy each of membrane proteins PsbA, PsbB, PsbC, PsbD, PsbE, PsbF, PsbH, PsbI, PsbJ, PsbK, PsbL, PsbM, PsbT, PsbY, PsbZ, Psb30/Ycf12, at least 3 peripheral proteins of the oxygen-evolving complex and a large number of cofactors. It forms dimeric complexes.

Its subcellular location is the plastid. The protein resides in the chloroplast thylakoid membrane. Its function is as follows. Found at the monomer-monomer interface of the photosystem II (PS II) dimer, plays a role in assembly and dimerization of PSII. PSII is a light-driven water plastoquinone oxidoreductase, using light energy to abstract electrons from H(2)O, generating a proton gradient subsequently used for ATP formation. The sequence is that of Photosystem II reaction center protein T from Welwitschia mirabilis (Tree tumbo).